Consider the following 418-residue polypeptide: Diaminopimelate decarboxylase (418 aa).

At Lys-53 the chain carries N6-(pyridoxal phosphate)lysine. Pyridoxal 5'-phosphate is bound by residues Gly-223 and 264–267 (EPGR). Residues Arg-267, Arg-303, and Tyr-307 each coordinate substrate. The Proton donor role is filled by Cys-338. Positions 339 and 374 each coordinate substrate. Tyr-374 is a binding site for pyridoxal 5'-phosphate.

Belongs to the Orn/Lys/Arg decarboxylase class-II family. LysA subfamily. In terms of assembly, homodimer. Pyridoxal 5'-phosphate serves as cofactor.

The catalysed reaction is meso-2,6-diaminopimelate + H(+) = L-lysine + CO2. Its pathway is amino-acid biosynthesis; L-lysine biosynthesis via DAP pathway; L-lysine from DL-2,6-diaminopimelate: step 1/1. Specifically catalyzes the decarboxylation of meso-diaminopimelate (meso-DAP) to L-lysine. This is Diaminopimelate decarboxylase from Buchnera aphidicola subsp. Baizongia pistaciae (strain Bp).